A 246-amino-acid polypeptide reads, in one-letter code: 1-(5-phosphoribosyl)-5-[(5-phosphoribosylamino)methylideneamino] imidazole-4-carboxamide isomerase (246 aa).

Aspartate 10 functions as the Proton acceptor in the catalytic mechanism.

This sequence belongs to the HisA/HisF family.

It is found in the cytoplasm. The catalysed reaction is 1-(5-phospho-beta-D-ribosyl)-5-[(5-phospho-beta-D-ribosylamino)methylideneamino]imidazole-4-carboxamide = 5-[(5-phospho-1-deoxy-D-ribulos-1-ylimino)methylamino]-1-(5-phospho-beta-D-ribosyl)imidazole-4-carboxamide. It participates in amino-acid biosynthesis; L-histidine biosynthesis; L-histidine from 5-phospho-alpha-D-ribose 1-diphosphate: step 4/9. The protein is 1-(5-phosphoribosyl)-5-[(5-phosphoribosylamino)methylideneamino] imidazole-4-carboxamide isomerase of Corynebacterium efficiens (strain DSM 44549 / YS-314 / AJ 12310 / JCM 11189 / NBRC 100395).